Here is a 251-residue protein sequence, read N- to C-terminus: Putative F-box protein L166 (251 aa).

Residues Met-1–Ile-46 form the F-box domain. The interval Pro-188–Arg-251 is disordered. Over residues Thr-202 to Ile-217 the composition is skewed to polar residues. A compositionally biased stretch (basic residues) spans Lys-241 to Arg-251.

The polypeptide is Putative F-box protein L166 (Acanthamoeba polyphaga (Amoeba)).